A 542-amino-acid chain; its full sequence is Putative beta-glucosidase 23 (542 aa).

The N-terminal stretch at 1–29 is a signal peptide; the sequence is MAACTSSLVSLLLLLLLLLLLLVAGEATA. N34 carries an N-linked (GlcNAc...) asparagine glycan. Q88 is a binding site for a beta-D-glucoside. A glycan (N-linked (GlcNAc...) asparagine) is linked at N135. Residue H216 participates in a beta-D-glucoside binding. Residue E262 is the Proton donor of the active site. A disulfide bridge connects residues C281 and C289. Residue Y405 coordinates a beta-D-glucoside. N445 carries an N-linked (GlcNAc...) asparagine glycan. A beta-D-glucoside contacts are provided by W476 and F492.

Belongs to the glycosyl hydrolase 1 family.

The catalysed reaction is Hydrolysis of terminal, non-reducing beta-D-glucosyl residues with release of beta-D-glucose.. The chain is Putative beta-glucosidase 23 (BGLU23) from Oryza sativa subsp. japonica (Rice).